Reading from the N-terminus, the 329-residue chain is G-protein coupled receptor 3 (329 aa).

Over 1–43 the chain is Extracellular; that stretch reads MMWGAGRSMAWFSAGSGSVNVSIDPAEEPTGPATLLPSPRAWD. The N-linked (GlcNAc...) asparagine glycan is linked to N20. A helical membrane pass occupies residues 44–64; that stretch reads VVLCISGTLVSCENALVVAII. Residues 65-73 lie on the Cytoplasmic side of the membrane; it reads VGTPAFRAP. The chain crosses the membrane as a helical span at residues 74–94; that stretch reads MFLLVGSLAVADLLAGLGLVL. Over 95–108 the chain is Extracellular; that stretch reads HFAADFCIGSPEMS. Residues 109 to 129 traverse the membrane as a helical segment; sequence LVLVGVLATAFTASIGSLLAI. Residues 130-153 are Cytoplasmic-facing; it reads TVDRYLSLYNALTYYSETTVTRTY. The chain crosses the membrane as a helical span at residues 154–174; it reads VMLALVWVGALGLGLVPVLAW. At 175–192 the chain is on the extracellular side; that stretch reads NCRDGLTTCGVVYPLSKN. A helical transmembrane segment spans residues 193–213; it reads HLVVLAIVFFMVFGIMLQLYA. At 214-247 the chain is on the cytoplasmic side; the sequence is QICRIVCRHAQQIALQRHLLPASHYVATRKGIAT. A helical membrane pass occupies residues 248–268; that stretch reads LAVVLGAFAACWLPFTVYCLL. At 269–277 the chain is on the extracellular side; sequence GDANSPPLY. The chain crosses the membrane as a helical span at residues 278–298; sequence TYLTLLPATYNSMINPVIYAF. The Cytoplasmic segment spans residues 299 to 329; that stretch reads RNQDVQKVLWAICCCCSTSKIPFRSRSPSDV. C312 is lipidated: S-palmitoyl cysteine. Phosphoserine occurs at positions 323, 325, and 327.

It belongs to the G-protein coupled receptor 1 family. Abundantly expressed in granule neurons at all development stages. Enriched in the longest tips of neurites during differentiation of hippocampal neurons.

The protein resides in the cell membrane. Functionally, constitutively active G-protein coupled receptor that maintains high 3'-5'-cyclic adenosine monophosphate (cAMP) levels that a plays a role in serveral processes including meiotic arrest in oocytes or neuronal development via activation of numerous intracellular signaling pathways. Acts as an essential activator of thermogenic adipocytes and drives thermogenesis via its intrinsic G(s)-coupling activity without the requirement of a ligand. Has a potential role in modulating a number of brain functions, including behavioral responses to stress, amyloid-beta peptide generation in neurons. Stimulates neurite outgrowth in cerebellar granular neurons modulated via PKA, ERK, and most strongly PI3K-mediated signaling pathways. This is G-protein coupled receptor 3 (Gpr3) from Rattus norvegicus (Rat).